The primary structure comprises 257 residues: Ras-related protein Rab-26 (257 aa).

The segment at 1–53 (MSRKKTPKSKGGSVPAASTLPAAANGPRLAHPRTARPGPEAPPNGPPQSGRPS) is disordered. The GTP site is built by S73, G74, V75, G76, K77, T78, C79, S96, and T97. T78 provides a ligand contact to Mg(2+). 2 consecutive short sequence motifs (switch) follow at residues 87–102 (GAFL…GIDF) and 120–137 (DTAG…YYRD). T97 and D120 together coordinate Mg(2+). Residues G123, N178, K179, D181, A209, and K210 each coordinate GTP. Residues C254 and C255 are each lipidated (S-geranylgeranyl cysteine).

Belongs to the small GTPase superfamily. Rab family. In terms of assembly, interacts with ADRA2B. Interacts with RIMS1. It depends on Mg(2+) as a cofactor. As to expression, expressed in pancreas, kidney, brain, submandibular gland, and lung.

It is found in the cytoplasmic vesicle. The protein localises to the secretory vesicle membrane. The protein resides in the golgi apparatus membrane. The enzyme catalyses GTP + H2O = GDP + phosphate + H(+). With respect to regulation, regulated by guanine nucleotide exchange factors (GEFs) which promote the exchange of bound GDP for free GTP. Regulated by GTPase activating proteins (GAPs) which increase the GTP hydrolysis activity. Inhibited by GDP dissociation inhibitors (GDIs). In terms of biological role, the small GTPases Rab are key regulators of intracellular membrane trafficking, from the formation of transport vesicles to their fusion with membranes. Rabs cycle between an inactive GDP-bound form and an active GTP-bound form that is able to recruit to membranes different set of downstream effectors directly responsible for vesicle formation, movement, tethering and fusion. RAB26 mediates transport of ADRA2A and ADRA2B from the Golgi to the cell membrane. Plays a role in the maturation of zymogenic granules and in pepsinogen secretion in the stomach. Plays a role in the secretion of amylase from acinar granules in the parotid gland. This chain is Ras-related protein Rab-26, found in Rattus norvegicus (Rat).